We begin with the raw amino-acid sequence, 166 residues long: Cyclic pyranopterin monophosphate synthase (166 aa).

Substrate-binding positions include L75–H77 and M113–E114. D128 is an active-site residue.

This sequence belongs to the MoaC family. In terms of assembly, homohexamer; trimer of dimers.

The catalysed reaction is (8S)-3',8-cyclo-7,8-dihydroguanosine 5'-triphosphate = cyclic pyranopterin phosphate + diphosphate. Its pathway is cofactor biosynthesis; molybdopterin biosynthesis. Functionally, catalyzes the conversion of (8S)-3',8-cyclo-7,8-dihydroguanosine 5'-triphosphate to cyclic pyranopterin monophosphate (cPMP). In Thermomicrobium roseum (strain ATCC 27502 / DSM 5159 / P-2), this protein is Cyclic pyranopterin monophosphate synthase.